The following is a 929-amino-acid chain: MESMLNKLKSTVTKVTADVTSAVMGNPVTREFDVGRHIASGGNGLAWKIFNGTKKSTKQEVAVFVFDKKLIDKYQKFEKDQIIDSLKRGVQQLTRLRHPRLLTVQHPLEESRDCLAFCTEPVFASLANVLGNWENLPSPISPDIKDYKLYDVETKYGLLQVSEGLSFLHSSVKMVHGNITPENIILNKSGAWKIMGFDFCVSSTNPSEQEPKFPCKEWDPNLPSLCLPNPEYLAPEYILSVSCETASDMYSLGTVMYAVFNKGKPIFEVNKQDIYKSFSRQLDQLSRLGSSSLTNIPEEVREHVKLLLNVTPTVRPDADQMTKIPFFDDVGAVTLQYFDTLFQRDNLQKSQFFKGLPKVLPKLPKRVIVQRILPCLTSEFVNPDMVPFVLPNVLLIAEECTKEEYVKLILPELGPVFKQQEPIQILLIFLQKMDLLLTKTPPDEIKNSVLPMVYRALEAPSIQIQELCLNIIPTFANLIDYPSMKNALIPRIKNACLQTSSLAVRVNSLVCLGKILEYLDKWFVLDDILPFLQQIPSKEPAVLMGILGIYKCTFTHKKLGITKEQLAGKVLPHLIPLSIENNLNLNQFNSFISVIKEMLNRLESEHKTKLEQLHIMQEQQKSLDIGNQMNVSEEMKVTNIGNQQIDKVFNNIGADLLTGSESENKEDGLQNKHKRASLTLEEKQKLAKEQEQAQKLKSQQPLKPQVHTPVATVKQTKDLTDTLMDNMSSLTSLSVSTPKSSASSTFTSVPSMGIGMMFSTPTDNTKRNLTNGLNANMGFQTSGFNMPVNTNQNFYSSPSTVGVTKMTLGTPPTLPNFNALSVPPAGAKQTQQRPTDMSALNNLFGPQKPKVSMNQLSQQKPNQWLNQFVPPQGSPTMGSSVMGTQMNVIGQSAFGMQGNPFFNPQNFAQPPTTMTNSSSASNDLKDLFG.

A Protein kinase domain is found at F32–F327. Residues D443–I479 form an HEAT repeat. Positions E661–P701 form a coiled coil. Position 677 is a phosphoserine (S677). Residues Q684–Q694 show a composition bias toward basic and acidic residues. 2 disordered regions span residues Q684 to P709 and N906 to G929. Low complexity predominate over residues K695–Q705. The interval Q699–G929 is necessary for interaction with AP2 complex and clathrin, interaction with clathrin is necessary for its targeting to the TGN and endosomal membranes. A Phosphothreonine modification is found at T708. Polar residues predominate over residues T912–N922.

This sequence belongs to the protein kinase superfamily. As to quaternary structure, interacts with clathrin and AP2B1; the interaction mediates the association with the AP-2 complex. Post-translationally, could autophosphorylate in presence of poly-L-lysine.

It is found in the cytoplasmic vesicle. Its subcellular location is the clathrin-coated vesicle. The protein resides in the golgi apparatus. The protein localises to the trans-Golgi network membrane. It localises to the endosome membrane. Component of the AP2-containing clathrin coat that may regulate clathrin-dependent trafficking at plasma membrane, TGN and endosomal system. A possible serine/threonine-protein kinase toward the beta2-subunit of the plasma membrane adapter complex AP2 and other proteins in presence of poly-L-lysine has not been confirmed. By regulating the expression of excitatory receptors at synapses, plays an essential role in neuronal function and signaling and in brain development. This is SCY1-like protein 2 from Homo sapiens (Human).